Consider the following 87-residue polypeptide: RNA-binding protein Hfq (87 aa).

Residues 9–68 (DPFLNALRRERIPVSIYLVNGIKLQGQIESFDQFVILLKNTVNQMVYKHAISTVVPARPV) form the Sm domain. Residues 65-87 (ARPVSHHSGDRPQGDRPQEKSED) form a disordered region. A compositionally biased stretch (basic and acidic residues) spans 71-87 (HSGDRPQGDRPQEKSED).

The protein belongs to the Hfq family. As to quaternary structure, homohexamer.

Functionally, RNA chaperone that binds small regulatory RNA (sRNAs) and mRNAs to facilitate mRNA translational regulation in response to envelope stress, environmental stress and changes in metabolite concentrations. Also binds with high specificity to tRNAs. This is RNA-binding protein Hfq from Vibrio parahaemolyticus serotype O3:K6 (strain RIMD 2210633).